Here is a 205-residue protein sequence, read N- to C-terminus: Small ribosomal subunit protein bS16 (205 aa).

Positions 110 to 205 (GEEVKIAVGT…ADDNEEPEDE (96 aa)) are disordered. The span at 123-132 (DPLERERERA) shows a compositional bias: basic and acidic residues. The span at 153-205 (EETEAEEAEDVETADAEDADAASETDEPEAAADEADETDASADADDNEEPEDE) shows a compositional bias: acidic residues.

This sequence belongs to the bacterial ribosomal protein bS16 family.

The chain is Small ribosomal subunit protein bS16 from Salinibacter ruber (strain DSM 13855 / M31).